The sequence spans 44 residues: Putative protein PsbN (44 aa).

The helical transmembrane segment at 3–23 (IISFLSTIFLGFFIISTTIYS) threads the bilayer.

Belongs to the PsbN family.

The protein resides in the plastid. Its subcellular location is the chloroplast thylakoid membrane. Its function is as follows. May play a role in photosystem I and II biogenesis. In Euglena gracilis, this protein is Putative protein PsbN.